Here is a 65-residue protein sequence, read N- to C-terminus: Conotoxin VnMLCL-031 (65 aa).

The first 19 residues, 1 to 19 (MLCLPXFIILLLLASPAAP), serve as a signal peptide directing secretion. A propeptide spanning residues 20 to 43 (NPLQTRXQSNLIRAGPEDANIKTX) is cleaved from the precursor. Ile-64 carries the post-translational modification Isoleucine amide.

It belongs to the conotoxin T superfamily. In terms of tissue distribution, expressed by the venom duct.

The protein localises to the secreted. The protein is Conotoxin VnMLCL-031 of Conus ventricosus (Mediterranean cone).